Consider the following 235-residue polypeptide: Cobalt transport protein CbiM (235 aa).

A signal peptide spans 1 to 33 (MRYLKFFLLLVFLVPSFGFSMHIMEGFLPPTHA). 6 helical membrane passes run 34-51 (LIWYILSLPFFVIGLFTI), 63-83 (MLLAFVGAFTFVLSAMKIPSV), 95-115 (LGAIIFGPFTMTVIGTIVLLF), 118-138 (LLLAHGGLTTLGANTFSMAIV), 156-176 (NIAVFLAAFLGDLFTYVTTSF), and 199-219 (IFAITQVPLAIIEGLVTVVVI).

The protein belongs to the CbiM family. As to quaternary structure, forms an energy-coupling factor (ECF) transporter complex composed of an ATP-binding protein (A component, CbiO), a transmembrane protein (T component, CbiQ) and 2 possible substrate-capture proteins (S components, CbiM and CbiN) of unknown stoichimetry.

The protein resides in the cell inner membrane. It participates in cofactor biosynthesis; adenosylcobalamin biosynthesis. In terms of biological role, part of the energy-coupling factor (ECF) transporter complex CbiMNOQ involved in cobalt import. The polypeptide is Cobalt transport protein CbiM (Thermosipho melanesiensis (strain DSM 12029 / CIP 104789 / BI429)).